The chain runs to 363 residues: 3-dehydroquinate synthase (363 aa).

NAD(+)-binding positions include 71 to 76 (DGEQYK), 105 to 109 (GVIGD), 129 to 130 (TT), K142, K151, and 169 to 172 (CLKT). 3 residues coordinate Zn(2+): E184, H247, and H264.

It belongs to the sugar phosphate cyclases superfamily. Dehydroquinate synthase family. The cofactor is NAD(+). Requires Co(2+) as cofactor. Zn(2+) is required as a cofactor.

The protein resides in the cytoplasm. The enzyme catalyses 7-phospho-2-dehydro-3-deoxy-D-arabino-heptonate = 3-dehydroquinate + phosphate. It participates in metabolic intermediate biosynthesis; chorismate biosynthesis; chorismate from D-erythrose 4-phosphate and phosphoenolpyruvate: step 2/7. Its function is as follows. Catalyzes the conversion of 3-deoxy-D-arabino-heptulosonate 7-phosphate (DAHP) to dehydroquinate (DHQ). This Vibrio vulnificus (strain CMCP6) protein is 3-dehydroquinate synthase.